The chain runs to 500 residues: Probable malate:quinone oxidoreductase (500 aa).

This sequence belongs to the MQO family. The cofactor is FAD.

It carries out the reaction (S)-malate + a quinone = a quinol + oxaloacetate. It participates in carbohydrate metabolism; tricarboxylic acid cycle; oxaloacetate from (S)-malate (quinone route): step 1/1. The sequence is that of Probable malate:quinone oxidoreductase from Bacillus mycoides (strain KBAB4) (Bacillus weihenstephanensis).